Here is a 151-residue protein sequence, read N- to C-terminus: RNA polymerase-binding transcription factor DksA (151 aa).

Residues Cys-114, Cys-117, Cys-135, and Cys-138 each contribute to the Zn(2+) site. The segment at Cys-114–Cys-138 adopts a dksA C4-type zinc-finger fold.

The protein belongs to the DksA family. In terms of assembly, interacts directly with the RNA polymerase.

It localises to the cytoplasm. Transcription factor that acts by binding directly to the RNA polymerase (RNAP). Required for negative regulation of rRNA expression and positive regulation of several amino acid biosynthesis promoters. Also required for regulation of fis expression. The polypeptide is RNA polymerase-binding transcription factor DksA (Buchnera aphidicola subsp. Schizaphis graminum (strain Sg)).